The following is a 165-amino-acid chain: PARP-type zinc finger-containing protein C13F5.07c (165 aa).

The segment at 8–100 adopts a PARP-type; degenerate zinc-finger fold; it reads YRIEIAPNNR…KVVDAINEGH (93 aa). Residues 100 to 114 show a composition bias toward basic and acidic residues; the sequence is HVSESDERESRKLGE. Residues 100–165 form a disordered region; sequence HVSESDERES…TDGSEAYEDD (66 aa). Positions 117 to 128 are enriched in polar residues; it reads NVNSQKLKTSSP. Positions 131 to 141 are enriched in basic residues; that stretch reads VVRKNKRHHTT. Residues 149 to 165 are compositionally biased toward acidic residues; that stretch reads SDLDAEFTDGSEAYEDD.

The protein localises to the cytoplasm. The protein resides in the nucleus. The chain is PARP-type zinc finger-containing protein C13F5.07c from Schizosaccharomyces pombe (strain 972 / ATCC 24843) (Fission yeast).